Here is a 776-residue protein sequence, read N- to C-terminus: Probable inorganic carbon transporter subunit DabA (776 aa).

4 residues coordinate Zn(2+): C313, D315, H473, and C488.

It belongs to the inorganic carbon transporter (TC 9.A.2) DabA family. In terms of assembly, forms a complex with DabB. It depends on Zn(2+) as a cofactor.

Its subcellular location is the cell inner membrane. Part of an energy-coupled inorganic carbon pump. This chain is Probable inorganic carbon transporter subunit DabA, found in Chromobacterium violaceum (strain ATCC 12472 / DSM 30191 / JCM 1249 / CCUG 213 / NBRC 12614 / NCIMB 9131 / NCTC 9757 / MK).